The chain runs to 113 residues: Hydrogenase maturation factor HypA (113 aa).

H2 contacts Ni(2+). Zn(2+)-binding residues include C73, C76, C89, and C92.

Belongs to the HypA/HybF family.

Functionally, involved in the maturation of [NiFe] hydrogenases. Required for nickel insertion into the metal center of the hydrogenase. This Picosynechococcus sp. (strain ATCC 27264 / PCC 7002 / PR-6) (Agmenellum quadruplicatum) protein is Hydrogenase maturation factor HypA.